An 89-amino-acid chain; its full sequence is Small ribosomal subunit protein uS15 (89 aa).

The protein belongs to the universal ribosomal protein uS15 family. Part of the 30S ribosomal subunit. Forms a bridge to the 50S subunit in the 70S ribosome, contacting the 23S rRNA.

One of the primary rRNA binding proteins, it binds directly to 16S rRNA where it helps nucleate assembly of the platform of the 30S subunit by binding and bridging several RNA helices of the 16S rRNA. Functionally, forms an intersubunit bridge (bridge B4) with the 23S rRNA of the 50S subunit in the ribosome. In Pelodictyon phaeoclathratiforme (strain DSM 5477 / BU-1), this protein is Small ribosomal subunit protein uS15.